A 220-amino-acid polypeptide reads, in one-letter code: Glutathione S-transferase 2 (220 aa).

The region spanning Val-2–Gly-88 is the GST N-terminal domain. Residues Tyr-7 to Trp-8, Pro-43 to Trp-46, Lys-50, Asn-59 to Leu-60, and Gln-72 to Ser-73 each bind glutathione. The GST C-terminal domain occupies Thr-90–Ile-208. A substrate-binding site is contributed by Tyr-116.

The protein belongs to the GST superfamily. Mu family. In terms of assembly, homodimer.

Its subcellular location is the cytoplasm. The enzyme catalyses RX + glutathione = an S-substituted glutathione + a halide anion + H(+). Functionally, conjugation of reduced glutathione to a wide number of exogenous and endogenous hydrophobic electrophiles. Participates in the formation of novel hepoxilin regioisomers. This chain is Glutathione S-transferase 2 (GSTM2), found in Gallus gallus (Chicken).